A 231-amino-acid polypeptide reads, in one-letter code: Large ribosomal subunit protein uL1 (231 aa).

Belongs to the universal ribosomal protein uL1 family. As to quaternary structure, part of the 50S ribosomal subunit.

Its function is as follows. Binds directly to 23S rRNA. The L1 stalk is quite mobile in the ribosome, and is involved in E site tRNA release. In terms of biological role, protein L1 is also a translational repressor protein, it controls the translation of the L11 operon by binding to its mRNA. The polypeptide is Large ribosomal subunit protein uL1 (Moorella thermoacetica (strain ATCC 39073 / JCM 9320)).